The sequence spans 237 residues: Survival of motor neuron-related-splicing factor 30 (237 aa).

Over residues Ser-52–Pro-69 the composition is skewed to polar residues. 2 disordered regions span residues Ser-52 to Trp-73 and Arg-149 to Phe-198. A Tudor domain is found at Ser-72–Asp-132. A Nuclear localization signal motif is present at residues Lys-142–Val-160. The span at Tyr-151–Gln-161 shows a compositional bias: basic residues. Positions Arg-162–Ser-175 are enriched in basic and acidic residues. A compositionally biased stretch (polar residues) spans Lys-176 to Tyr-185.

It belongs to the SMN family. In terms of assembly, associates with spliceosomes.

The protein localises to the nucleus speckle. The protein resides in the nucleus. Its subcellular location is the cajal body. In terms of biological role, involved in spliceosome assembly. The polypeptide is Survival of motor neuron-related-splicing factor 30 (smndc1) (Danio rerio (Zebrafish)).